The chain runs to 390 residues: Flap endonuclease 1 (390 aa).

Residues 1 to 111 (MGIKGLAKLL…GELLKRREKR (111 aa)) form an N-domain region. Asp-34 is a binding site for Mg(2+). DNA contacts are provided by Arg-47 and Arg-77. Asp-93, Glu-165, Glu-167, Asp-186, and Asp-188 together coordinate Mg(2+). Positions 129–260 (EQDKQSKRLV…KTALKLIREH (132 aa)) are I-domain. Glu-165 is a DNA binding site. Gly-238 and Asp-240 together coordinate DNA. Asp-240 provides a ligand contact to Mg(2+). A disordered region spans residues 342–390 (KPQSRMDSFFKVKANPEGDKKKAEKRKAELAASRGKGKKGKGGGGFKKK). The tract at residues 343-351 (PQSRMDSFF) is interaction with PCNA. The span at 349 to 370 (SFFKVKANPEGDKKKAEKRKAE) shows a compositional bias: basic and acidic residues. Over residues 376–390 (GKGKKGKGGGGFKKK) the composition is skewed to basic residues.

Belongs to the XPG/RAD2 endonuclease family. FEN1 subfamily. In terms of assembly, interacts with PCNA. Three molecules of FEN1 bind to one PCNA trimer with each molecule binding to one PCNA monomer. PCNA stimulates the nuclease activity without altering cleavage specificity. Mg(2+) serves as cofactor. Phosphorylated. Phosphorylation upon DNA damage induces relocalization to the nuclear plasma.

Its subcellular location is the nucleus. The protein localises to the nucleolus. It localises to the nucleoplasm. The protein resides in the mitochondrion. Structure-specific nuclease with 5'-flap endonuclease and 5'-3' exonuclease activities involved in DNA replication and repair. During DNA replication, cleaves the 5'-overhanging flap structure that is generated by displacement synthesis when DNA polymerase encounters the 5'-end of a downstream Okazaki fragment. It enters the flap from the 5'-end and then tracks to cleave the flap base, leaving a nick for ligation. Also involved in the long patch base excision repair (LP-BER) pathway, by cleaving within the apurinic/apyrimidinic (AP) site-terminated flap. Acts as a genome stabilization factor that prevents flaps from equilibrating into structures that lead to duplications and deletions. Also possesses 5'-3' exonuclease activity on nicked or gapped double-stranded DNA, and exhibits RNase H activity. Also involved in replication and repair of rDNA and in repairing mitochondrial DNA. The polypeptide is Flap endonuclease 1 (Thalassiosira pseudonana (Marine diatom)).